Reading from the N-terminus, the 359-residue chain is 24-methylenesterol C-methyltransferase 3 (359 aa).

Residues Val-4–Leu-24 traverse the membrane as a helical segment.

It belongs to the class I-like SAM-binding methyltransferase superfamily. Erg6/SMT family.

The protein resides in the membrane. It carries out the reaction 24-methylidenelophenol + S-adenosyl-L-methionine = (Z)-24-ethylidenelophenol + S-adenosyl-L-homocysteine + H(+). It functions in the pathway steroid biosynthesis; sterol biosynthesis. Functionally, catalyzes the methyl transfer from S-adenosyl-methionine to the methylene group of 24-methylene lophenol to form 24-ethylidene lophenol. This is 24-methylenesterol C-methyltransferase 3 (SMT3) from Arabidopsis thaliana (Mouse-ear cress).